The primary structure comprises 142 residues: Large ribosomal subunit protein uL13 (142 aa).

The protein belongs to the universal ribosomal protein uL13 family. Part of the 50S ribosomal subunit.

In terms of biological role, this protein is one of the early assembly proteins of the 50S ribosomal subunit, although it is not seen to bind rRNA by itself. It is important during the early stages of 50S assembly. The sequence is that of Large ribosomal subunit protein uL13 from Salmonella agona (strain SL483).